The primary structure comprises 157 residues: S-ribosylhomocysteine lyase (157 aa).

Fe cation contacts are provided by H54, H58, and C124.

The protein belongs to the LuxS family. In terms of assembly, homodimer. The cofactor is Fe cation.

The enzyme catalyses S-(5-deoxy-D-ribos-5-yl)-L-homocysteine = (S)-4,5-dihydroxypentane-2,3-dione + L-homocysteine. Functionally, involved in the synthesis of autoinducer 2 (AI-2) which is secreted by bacteria and is used to communicate both the cell density and the metabolic potential of the environment. The regulation of gene expression in response to changes in cell density is called quorum sensing. Catalyzes the transformation of S-ribosylhomocysteine (RHC) to homocysteine (HC) and 4,5-dihydroxy-2,3-pentadione (DPD). This chain is S-ribosylhomocysteine lyase, found in Oenococcus oeni (strain ATCC BAA-331 / PSU-1).